The primary structure comprises 154 residues: Ribosome maturation factor RimP (154 aa).

It belongs to the RimP family.

The protein localises to the cytoplasm. Functionally, required for maturation of 30S ribosomal subunits. This is Ribosome maturation factor RimP from Desulforudis audaxviator (strain MP104C).